The chain runs to 718 residues: Kelch-like protein 4 (718 aa).

The interval 46 to 69 is disordered; that stretch reads TPVQGRLKSHSRDRNGLKKSNSPV. A BTB domain is found at 182 to 249; sequence CDVLLIAGHL…AYTGVLQLKE (68 aa). 6 Kelch repeats span residues 430-476, 477-523, 525-570, 571-617, 619-670, and 671-717; these read ALYA…VIDN, KLYV…TLEG, MYAV…ALNN, KLYA…TYNG, LYVV…PLGD, and KLYV…VVKL.

In terms of tissue distribution, expressed in adult fibroblasts and in a range of fetal tissues including tongue, palate, and mandible.

The protein localises to the cytoplasm. It localises to the cytoskeleton. The sequence is that of Kelch-like protein 4 (KLHL4) from Homo sapiens (Human).